A 491-amino-acid chain; its full sequence is Probable cytosol aminopeptidase (491 aa).

Mn(2+) contacts are provided by lysine 264 and aspartate 269. The active site involves lysine 276. The Mn(2+) site is built by aspartate 287, aspartate 346, and glutamate 348. Arginine 350 is a catalytic residue.

This sequence belongs to the peptidase M17 family. The cofactor is Mn(2+).

Its subcellular location is the cytoplasm. The catalysed reaction is Release of an N-terminal amino acid, Xaa-|-Yaa-, in which Xaa is preferably Leu, but may be other amino acids including Pro although not Arg or Lys, and Yaa may be Pro. Amino acid amides and methyl esters are also readily hydrolyzed, but rates on arylamides are exceedingly low.. It catalyses the reaction Release of an N-terminal amino acid, preferentially leucine, but not glutamic or aspartic acids.. Its function is as follows. Presumably involved in the processing and regular turnover of intracellular proteins. Catalyzes the removal of unsubstituted N-terminal amino acids from various peptides. The protein is Probable cytosol aminopeptidase of Xylella fastidiosa (strain Temecula1 / ATCC 700964).